We begin with the raw amino-acid sequence, 220 residues long: Phosphatidylserine decarboxylase proenzyme (220 aa).

Residue serine 189 is the Schiff-base intermediate with substrate; via pyruvic acid of the active site. At serine 189 the chain carries Pyruvic acid (Ser); by autocatalysis.

It belongs to the phosphatidylserine decarboxylase family. PSD-A subfamily. In terms of assembly, heterodimer of a large membrane-associated beta subunit and a small pyruvoyl-containing alpha subunit. The cofactor is pyruvate. Is synthesized initially as an inactive proenzyme. Formation of the active enzyme involves a self-maturation process in which the active site pyruvoyl group is generated from an internal serine residue via an autocatalytic post-translational modification. Two non-identical subunits are generated from the proenzyme in this reaction, and the pyruvate is formed at the N-terminus of the alpha chain, which is derived from the carboxyl end of the proenzyme. The post-translation cleavage follows an unusual pathway, termed non-hydrolytic serinolysis, in which the side chain hydroxyl group of the serine supplies its oxygen atom to form the C-terminus of the beta chain, while the remainder of the serine residue undergoes an oxidative deamination to produce ammonia and the pyruvoyl prosthetic group on the alpha chain.

Its subcellular location is the cell membrane. The catalysed reaction is a 1,2-diacyl-sn-glycero-3-phospho-L-serine + H(+) = a 1,2-diacyl-sn-glycero-3-phosphoethanolamine + CO2. The protein operates within phospholipid metabolism; phosphatidylethanolamine biosynthesis; phosphatidylethanolamine from CDP-diacylglycerol: step 2/2. In terms of biological role, catalyzes the formation of phosphatidylethanolamine (PtdEtn) from phosphatidylserine (PtdSer). The protein is Phosphatidylserine decarboxylase proenzyme of Pelobacter propionicus (strain DSM 2379 / NBRC 103807 / OttBd1).